The primary structure comprises 202 residues: ATP-dependent Clp protease proteolytic subunit (202 aa).

The active-site Nucleophile is the Ser-101. His-126 is an active-site residue.

The protein belongs to the peptidase S14 family. Component of the chloroplastic Clp protease core complex.

The protein resides in the plastid. The protein localises to the chloroplast stroma. It carries out the reaction Hydrolysis of proteins to small peptides in the presence of ATP and magnesium. alpha-casein is the usual test substrate. In the absence of ATP, only oligopeptides shorter than five residues are hydrolyzed (such as succinyl-Leu-Tyr-|-NHMec, and Leu-Tyr-Leu-|-Tyr-Trp, in which cleavage of the -Tyr-|-Leu- and -Tyr-|-Trp bonds also occurs).. Cleaves peptides in various proteins in a process that requires ATP hydrolysis. Has a chymotrypsin-like activity. Plays a major role in the degradation of misfolded proteins. The chain is ATP-dependent Clp protease proteolytic subunit from Illicium oligandrum (Star anise).